The following is a 341-amino-acid chain: S-adenosylmethionine:tRNA ribosyltransferase-isomerase (341 aa).

It belongs to the QueA family. As to quaternary structure, monomer.

It localises to the cytoplasm. It catalyses the reaction 7-aminomethyl-7-carbaguanosine(34) in tRNA + S-adenosyl-L-methionine = epoxyqueuosine(34) in tRNA + adenine + L-methionine + 2 H(+). It functions in the pathway tRNA modification; tRNA-queuosine biosynthesis. Functionally, transfers and isomerizes the ribose moiety from AdoMet to the 7-aminomethyl group of 7-deazaguanine (preQ1-tRNA) to give epoxyqueuosine (oQ-tRNA). The sequence is that of S-adenosylmethionine:tRNA ribosyltransferase-isomerase from Clostridium botulinum (strain Kyoto / Type A2).